The chain runs to 108 residues: Latartoxin-2c (108 aa).

The N-terminal stretch at 1–19 is a signal peptide; the sequence is MKVLVITALCFILLQNVLG. The propeptide at 20–42 is removed in mature form; it reads EDTYEDLQNYIENLINENQDEAR. The Processing quadruplet motif signature appears at 39-42; the sequence is DEAR. Cystine bridges form between Cys-44-Cys-61, Cys-51-Cys-72, Cys-60-Cys-84, and Cys-74-Cys-82. Position 107 is an isoleucine amide (Ile-107).

This sequence belongs to the neurotoxin 19 (CSTX) family. 11 (latartoxin) subfamily. Contains 4 disulfide bonds. Post-translationally, cleavage of the propeptide depends on the processing quadruplet motif (XXXR, with at least one of X being E). As to expression, expressed by the venom gland.

The protein resides in the secreted. Insect toxin. This Lachesana tarabaevi (Spider) protein is Latartoxin-2c.